The sequence spans 550 residues: MMPRAQLTTFLIVTSFLSTVPYLRAPVHGGVLTSYDVSSLDIMSKIHTDHDATTKASSDFGHIVHATPNGVFRPTFPADIAALIRLSLSQPTPFTVAPRGKGHSSRGQAFAPGGIVVDMSALGDHGHHTSHRIDVSVDRMYVDAGGEQLWIDVLHTALKHGLTPRVWTDYLRITVGGTLSNAGIGGQAFRHGPQISNVHELDVVTGMGEMITCSPEVNSALFFAVLGGLGQFGVITRARIRLEPAPKRVKWVRIAYSDVHPFTTDQELLISKWASGSGFDYVEGQVQLNRTLTQGRRSSSFFSATDLARLTGLAIDTGSVAIYYIEGAMYYDDNTAASVDQKLDALLEELSFVRGFVFVRDASYVEFLDRVGREEQNLRSAGAWDVPHPWLNLFVPRSRILHFDAAVFKGILRNANPVGLILMYPMNKDMWDDRMTAMTPDEDVFYAVGLLRSAVAGGSGGDVEQLERENAAVLELCDLAGGGIGCRQYLPHHASRDGWRRHFGAKWGRVADLKARYDPRAILSPGQGIFPPPPPPSPPPPAAGEPITAS.

The N-terminal stretch at 1–26 is a signal peptide; the sequence is MMPRAQLTTFLIVTSFLSTVPYLRAP. An FAD-binding PCMH-type domain is found at 64-245; sequence VHATPNGVFR…TRARIRLEPA (182 aa). 3 residues coordinate FAD: Gly100, Lys101, and Gly102. Pros-8alpha-FAD histidine is present on His103. FAD is bound by residues Ser104, Gln108, Asp169, Thr174, Ser180, Ile184, and Ile235. Asn289 is a glycosylation site (N-linked (GlcNAc...) asparagine). FAD contacts are provided by Tyr489, Ser524, and Gln527. The interval 523–550 is disordered; sequence LSPGQGIFPPPPPPSPPPPAAGEPITAS. Pro residues predominate over residues 530 to 543; the sequence is FPPPPPPSPPPPAA.

It belongs to the oxygen-dependent FAD-linked oxidoreductase family. Monomer. It depends on FAD as a cofactor.

It localises to the secreted. It is found in the extracellular space. The enzyme catalyses N(6)-dimethylallyladenine + A + H2O = 3-methyl-2-butenal + adenine + AH2. Its function is as follows. Catalyzes the oxidation of cytokinins, a family of N(6)-substituted adenine derivatives that are plant hormones, where the substituent is an isopentenyl group. This chain is Cytokinin dehydrogenase 10 (CKX10), found in Oryza sativa subsp. japonica (Rice).